A 203-amino-acid chain; its full sequence is MFHNTFQSGLLSVLYSIGSKPLQIWDTQIKNGHVKRITDEEIQSLVLEIMGNNISTAFISCPVDPEKTLGIKLPFFVMVVKNMNKYFSFEVQIIDDKKIKRRFRASNYQSATRVKPFICTMPMRMDEGWNQIQFNLSDFVKRAYGTNYVETLRIQIHANCRIRRVYFADRLYTEDELPAEFKLYLPIRGQLSTQSPAFAMTSE.

Belongs to the CFAP20 family.

It localises to the nucleus. Its subcellular location is the cytoplasm. The protein localises to the cytoskeleton. The protein resides in the microtubule organizing center. It is found in the centrosome. It localises to the centriole. Its subcellular location is the cilium basal body. The protein localises to the cilium axoneme. Its function is as follows. Cilium- and flagellum-specific protein that plays a role in axonemal structure organization and motility. Microtubule inner protein (MIP) part of the dynein-decorated doublet microtubules (DMTs) in cilia axoneme, which is required for motile cilia beating. Involved in the regulation of the size and morphology of cilia. Required for axonemal microtubules polyglutamylation. This chain is Cilia- and flagella-associated protein 20, found in Caenorhabditis briggsae.